A 257-amino-acid chain; its full sequence is NAD-capped RNA hydrolase NudC (257 aa).

Arg-69 is a substrate binding site. Zn(2+) is bound by residues Cys-98 and Cys-101. Residue Glu-111 coordinates substrate. The Zn(2+) site is built by Cys-116 and Cys-119. Residue Tyr-124 participates in substrate binding. Residues 125-248 enclose the Nudix hydrolase domain; it reads PQIAPCIIVA…TVARRLIEDT (124 aa). Ala-158, Glu-174, and Glu-178 together coordinate a divalent metal cation. Positions 159-180 match the Nudix box motif; sequence GFVEVGETLEQAVAREVMEESG. 192-199 is a substrate binding site; that stretch reads QPWPFPQS. Glu-219 contributes to the a divalent metal cation binding site. Ala-241 is a substrate binding site.

Belongs to the Nudix hydrolase family. NudC subfamily. As to quaternary structure, homodimer. Requires Mg(2+) as cofactor. The cofactor is Mn(2+). Zn(2+) serves as cofactor.

It carries out the reaction a 5'-end NAD(+)-phospho-ribonucleoside in mRNA + H2O = a 5'-end phospho-adenosine-phospho-ribonucleoside in mRNA + beta-nicotinamide D-ribonucleotide + 2 H(+). The catalysed reaction is NAD(+) + H2O = beta-nicotinamide D-ribonucleotide + AMP + 2 H(+). It catalyses the reaction NADH + H2O = reduced beta-nicotinamide D-ribonucleotide + AMP + 2 H(+). Its function is as follows. mRNA decapping enzyme that specifically removes the nicotinamide adenine dinucleotide (NAD) cap from a subset of mRNAs by hydrolyzing the diphosphate linkage to produce nicotinamide mononucleotide (NMN) and 5' monophosphate mRNA. The NAD-cap is present at the 5'-end of some mRNAs and stabilizes RNA against 5'-processing. Has preference for mRNAs with a 5'-end purine. Catalyzes the hydrolysis of a broad range of dinucleotide pyrophosphates. The protein is NAD-capped RNA hydrolase NudC of Salmonella heidelberg (strain SL476).